A 186-amino-acid polypeptide reads, in one-letter code: Periplasmic nitrate reductase, electron transfer subunit (186 aa).

The first 20 residues, M1 to A20, serve as a signal peptide directing secretion. Heme c contacts are provided by H87, C102, C105, H106, H123, C144, C147, and H148.

This sequence belongs to the NapB family. In terms of assembly, component of the periplasmic nitrate reductase NapAB complex composed of NapA and NapB. In terms of processing, binds 2 heme C groups per subunit.

It is found in the periplasm. Functionally, electron transfer subunit of the periplasmic nitrate reductase complex NapAB. Transfers electrons to NapA subunit, thus allowing electron flow between membrane and periplasm. Essential for periplasmic nitrate reduction with nitrate as the terminal electron acceptor. In Wolinella succinogenes (strain ATCC 29543 / DSM 1740 / CCUG 13145 / JCM 31913 / LMG 7466 / NCTC 11488 / FDC 602W) (Vibrio succinogenes), this protein is Periplasmic nitrate reductase, electron transfer subunit.